Reading from the N-terminus, the 428-residue chain is Enolase (428 aa).

Gln163 provides a ligand contact to (2R)-2-phosphoglycerate. The Proton donor role is filled by Glu205. Residues Asp242, Glu285, and Asp312 each contribute to the Mg(2+) site. Lys337, Arg366, Ser367, and Lys388 together coordinate (2R)-2-phosphoglycerate. Lys337 serves as the catalytic Proton acceptor.

It belongs to the enolase family. Mg(2+) serves as cofactor.

The protein resides in the cytoplasm. Its subcellular location is the secreted. The protein localises to the cell surface. The enzyme catalyses (2R)-2-phosphoglycerate = phosphoenolpyruvate + H2O. It participates in carbohydrate degradation; glycolysis; pyruvate from D-glyceraldehyde 3-phosphate: step 4/5. Functionally, catalyzes the reversible conversion of 2-phosphoglycerate (2-PG) into phosphoenolpyruvate (PEP). It is essential for the degradation of carbohydrates via glycolysis. In Finegoldia magna (strain ATCC 29328 / DSM 20472 / WAL 2508) (Peptostreptococcus magnus), this protein is Enolase.